A 255-amino-acid chain; its full sequence is DASH complex subunit SPC34 (255 aa).

The interval 53–81 (LFSVPPPPPRQTTLTAEQQQQQKPSNRRQ) is disordered. Over residues 63–81 (QTTLTAEQQQQQKPSNRRQ) the composition is skewed to polar residues. Residues 176–248 (LAYYEAKIAE…QARLRALDAD (73 aa)) adopt a coiled-coil conformation.

The protein belongs to the DASH complex SPC34 family. As to quaternary structure, component of the DASH complex consisting of ASK1, DAD1, DAD2, DAD3, DAD4, DAM1, DUO1, HSK3, SPC19 and SPC34, with a stoichiometry of one copy of each subunit per complex. Multiple DASH complexes oligomerize to form a ring that encircles spindle microtubules and organizes the rod-like NDC80 complexes of the outer kinetochore of the outer kinetochore. DASH complex oligomerization strengthens microtubule attachments. On cytoplasmic microtubules, DASH complexes appear to form patches instead of rings.

It localises to the nucleus. Its subcellular location is the cytoplasm. The protein localises to the cytoskeleton. It is found in the spindle. The protein resides in the chromosome. It localises to the centromere. Its subcellular location is the kinetochore. In terms of biological role, component of the DASH complex that connects microtubules with kinetochores and couples microtubule depolymerisation to chromosome movement; it is involved in retrieving kinetochores to the spindle poles before their re-orientation on the spindle in early mitosis and allows microtubule depolymerization to pull chromosomes apart and resist detachment during anaphase. Kinetochores, consisting of a centromere-associated inner segment and a microtubule-contacting outer segment, play a crucial role in chromosome segregation by mediating the physical connection between centromeric DNA and microtubules. Kinetochores also serve as an input point for the spindle assembly checkpoint, which delays anaphase until all chromosomes have bioriented on the mitotic spindle. The sequence is that of DASH complex subunit SPC34 from Chaetomium thermophilum (strain DSM 1495 / CBS 144.50 / IMI 039719) (Thermochaetoides thermophila).